The following is a 71-amino-acid chain: Plasticin-C1 (71 aa).

The N-terminal stretch at 1 to 22 (MAFLKKSLLLVLFLGLVSLSIC) is a signal peptide. Positions 23–45 (EEEKRENEDEEKQEDDDQSENKR) are excised as a propeptide. The segment at 25–46 (EKRENEDEEKQEDDDQSENKRG) is disordered. The segment covering 30–40 (EDEEKQEDDDQ) has biased composition (acidic residues). The residue at position 68 (N68) is an Asparagine amide. A propeptide spanning residues 70-71 (ES) is cleaved from the precursor.

Belongs to the frog skin active peptide (FSAP) family. Plasticin subfamily. As to expression, expressed by the skin glands.

The protein localises to the secreted. It localises to the target cell membrane. Its function is as follows. Neutral peptide with no antimicrobial activity. May act in synergy with cationic peptides by enhancing their activity. Has a moderate hemolytic activity. The protein is Plasticin-C1 of Agalychnis callidryas (Red-eyed tree frog).